Here is a 234-residue protein sequence, read N- to C-terminus: Large ribosomal subunit protein uL1 (234 aa).

Belongs to the universal ribosomal protein uL1 family. As to quaternary structure, part of the 50S ribosomal subunit.

Its function is as follows. Binds directly to 23S rRNA. The L1 stalk is quite mobile in the ribosome, and is involved in E site tRNA release. Functionally, protein L1 is also a translational repressor protein, it controls the translation of the L11 operon by binding to its mRNA. The protein is Large ribosomal subunit protein uL1 of Escherichia coli (strain 55989 / EAEC).